A 220-amino-acid polypeptide reads, in one-letter code: Octanoyltransferase (220 aa).

The region spanning 31 to 211 is the BPL/LPL catalytic domain; the sequence is GTAADHLLLL…HFARIFDFEM (181 aa). Residues 76–83, 143–145, and 156–158 each bind substrate; these read RGGDVTYH, AIG, and GFA. Residue Cys-174 is the Acyl-thioester intermediate of the active site.

Belongs to the LipB family.

It is found in the cytoplasm. The enzyme catalyses octanoyl-[ACP] + L-lysyl-[protein] = N(6)-octanoyl-L-lysyl-[protein] + holo-[ACP] + H(+). It functions in the pathway protein modification; protein lipoylation via endogenous pathway; protein N(6)-(lipoyl)lysine from octanoyl-[acyl-carrier-protein]: step 1/2. Its function is as follows. Catalyzes the transfer of endogenously produced octanoic acid from octanoyl-acyl-carrier-protein onto the lipoyl domains of lipoate-dependent enzymes. Lipoyl-ACP can also act as a substrate although octanoyl-ACP is likely to be the physiological substrate. This is Octanoyltransferase from Solibacter usitatus (strain Ellin6076).